Here is an 883-residue protein sequence, read N- to C-terminus: DNA mismatch repair protein MutS (883 aa).

The disordered stretch occupies residues 1–25 (MSDSVAPDVPVIREGKNPAQHRDRT). Over residues 11–25 (VIREGKNPAQHRDRT) the composition is skewed to basic and acidic residues. An ATP-binding site is contributed by 664 to 671 (GPNASGKS). Residues 857-883 (RKGNTQPRARKSSAETEAKTQQFELPF) are disordered.

Belongs to the DNA mismatch repair MutS family.

Functionally, this protein is involved in the repair of mismatches in DNA. It is possible that it carries out the mismatch recognition step. This protein has a weak ATPase activity. This Acaryochloris marina (strain MBIC 11017) protein is DNA mismatch repair protein MutS.